Here is a 378-residue protein sequence, read N- to C-terminus: Erythronate-4-phosphate dehydrogenase (378 aa).

Residues Ser45 and Thr66 each contribute to the substrate site. NAD(+)-binding residues include Asp146 and Thr175. Arg208 is an active-site residue. Position 232 (Asp232) interacts with NAD(+). Residue Glu237 is part of the active site. The Proton donor role is filled by His254. Gly257 is a binding site for NAD(+). Position 258 (Tyr258) interacts with substrate.

The protein belongs to the D-isomer specific 2-hydroxyacid dehydrogenase family. PdxB subfamily. Homodimer.

Its subcellular location is the cytoplasm. The enzyme catalyses 4-phospho-D-erythronate + NAD(+) = (R)-3-hydroxy-2-oxo-4-phosphooxybutanoate + NADH + H(+). Its pathway is cofactor biosynthesis; pyridoxine 5'-phosphate biosynthesis; pyridoxine 5'-phosphate from D-erythrose 4-phosphate: step 2/5. Functionally, catalyzes the oxidation of erythronate-4-phosphate to 3-hydroxy-2-oxo-4-phosphonooxybutanoate. This Salmonella arizonae (strain ATCC BAA-731 / CDC346-86 / RSK2980) protein is Erythronate-4-phosphate dehydrogenase.